Consider the following 514-residue polypeptide: Exoglucanase 1 (514 aa).

An N-terminal signal peptide occupies residues 1 to 17; it reads MYQKLALISAFLATARA. Positions 18-453 are catalytic; that stretch reads QSACTLQAET…GSTGNSSGGN (436 aa). Disulfide bonds link Cys21-Cys89, Cys36-Cys42, Cys67-Cys88, Cys78-Cys84, Cys155-Cys414, Cys189-Cys227, Cys193-Cys226, Cys247-Cys273, Cys255-Cys260, and Cys278-Cys348. 2 N-linked (GlcNAc...) asparagine glycosylation sites follow: Asn62 and Asn81. Catalysis depends on Glu229, which acts as the Nucleophile. The active-site Proton donor is the Glu234. N-linked (GlcNAc...) asparagine glycosylation is present at Asn287. Disordered regions lie at residues 401 to 427 and 444 to 481; these read NETS…LESN and GSTG…PTQT. Residues 454–478 form a linker region; it reads PPGGNPPGTTTTRRPATSTGSSPGP. The span at 460–479 shows a compositional bias: low complexity; it reads PGTTTTRRPATSTGSSPGPT. The region spanning 478–514 is the CBM1 domain; the sequence is PTQTHYGQCGGIGYSGPTVCASGSTCQVLNPYYSQCL. 2 disulfides stabilise this stretch: Cys486-Cys503 and Cys497-Cys513.

The protein belongs to the glycosyl hydrolase 7 (cellulase C) family.

The catalysed reaction is Hydrolysis of (1-&gt;4)-beta-D-glucosidic linkages in cellulose and cellotetraose, releasing cellobiose from the non-reducing ends of the chains.. In terms of biological role, the biological conversion of cellulose to glucose generally requires three types of hydrolytic enzymes: (1) Endoglucanases which cut internal beta-1,4-glucosidic bonds; (2) Exocellobiohydrolases that cut the disaccharide cellobiose from the non-reducing end of the cellulose polymer chain; (3) Beta-1,4-glucosidases which hydrolyze the cellobiose and other short cello-oligosaccharides to glucose. The polypeptide is Exoglucanase 1 (cbh1) (Hypocrea rufa (Trichoderma viride)).